Reading from the N-terminus, the 416-residue chain is NADH-quinone oxidoreductase subunit D (416 aa).

It belongs to the complex I 49 kDa subunit family. NDH-1 is composed of 14 different subunits. Subunits NuoB, C, D, E, F, and G constitute the peripheral sector of the complex.

It is found in the cell inner membrane. The enzyme catalyses a quinone + NADH + 5 H(+)(in) = a quinol + NAD(+) + 4 H(+)(out). In terms of biological role, NDH-1 shuttles electrons from NADH, via FMN and iron-sulfur (Fe-S) centers, to quinones in the respiratory chain. The immediate electron acceptor for the enzyme in this species is believed to be ubiquinone. Couples the redox reaction to proton translocation (for every two electrons transferred, four hydrogen ions are translocated across the cytoplasmic membrane), and thus conserves the redox energy in a proton gradient. The protein is NADH-quinone oxidoreductase subunit D of Gluconacetobacter diazotrophicus (strain ATCC 49037 / DSM 5601 / CCUG 37298 / CIP 103539 / LMG 7603 / PAl5).